The following is a 155-amino-acid chain: UPF0178 protein RPC_3085 (155 aa).

It belongs to the UPF0178 family.

The chain is UPF0178 protein RPC_3085 from Rhodopseudomonas palustris (strain BisB18).